The following is a 165-amino-acid chain: Protein SprT (165 aa).

The SprT-like domain occupies 22 to 163; sequence LAQANLKLDR…RCVHCGEPLV (142 aa). Residue histidine 78 participates in Zn(2+) binding. The active site involves glutamate 79. Residue histidine 82 coordinates Zn(2+).

This sequence belongs to the SprT family. Zn(2+) is required as a cofactor.

The protein resides in the cytoplasm. This is Protein SprT from Salmonella paratyphi C (strain RKS4594).